A 904-amino-acid polypeptide reads, in one-letter code: DNA mismatch repair protein MutS (904 aa).

655-662 serves as a coordination point for ATP; it reads GPNMGGKS.

This sequence belongs to the DNA mismatch repair MutS family.

In terms of biological role, this protein is involved in the repair of mismatches in DNA. It is possible that it carries out the mismatch recognition step. This protein has a weak ATPase activity. This chain is DNA mismatch repair protein MutS, found in Agrobacterium fabrum (strain C58 / ATCC 33970) (Agrobacterium tumefaciens (strain C58)).